An 894-amino-acid polypeptide reads, in one-letter code: Protein NLP9 (894 aa).

One can recognise an RWP-RK domain in the interval 517 to 603 (QEISGARRLE…LDSVQGVEGG (87 aa)). Positions 578–598 (RKINKVNRSLRKIQTVLDSVQ) form a coiled coil. Positions 732 to 763 (NTRIERGNGTVEPNHSISSSMSDSSNSSGAVL) are disordered. Positions 747 to 763 (SISSSMSDSSNSSGAVL) are enriched in low complexity. The region spanning 792–875 (TLTVKATYRE…HTVKFLVRDI (84 aa)) is the PB1 domain.

The protein localises to the nucleus. In terms of biological role, probable transcription factor. This is Protein NLP9 (NLP9) from Arabidopsis thaliana (Mouse-ear cress).